A 313-amino-acid chain; its full sequence is Probable cytochrome c oxidase subunit 2 (313 aa).

The region spanning 5 to 51 (RYWSKQSYKKLKVDQEHNTTEYTNVCNSTSLGSTYTLPLKMELWKIY) is the RPE1 insert domain. 3 helical membrane-spanning segments follow: residues 39 to 59 (YTLP…YFLI), 94 to 114 (LLYI…FVCI), and 131 to 151 (LLIE…IAVP). His233, Cys268, Cys272, and His276 together coordinate Cu cation.

Belongs to the cytochrome c oxidase subunit 2 family. The cofactor is Cu cation. It depends on heme as a cofactor.

Its subcellular location is the cell membrane. It carries out the reaction 4 Fe(II)-[cytochrome c] + O2 + 8 H(+)(in) = 4 Fe(III)-[cytochrome c] + 2 H2O + 4 H(+)(out). Subunits I and II form the functional core of the enzyme complex. Electrons originating in cytochrome c are transferred via heme a and Cu(A) to the binuclear center formed by heme a3 and Cu(B). This is Probable cytochrome c oxidase subunit 2 (ctaC) from Rickettsia prowazekii (strain Madrid E).